Here is a 391-residue protein sequence, read N- to C-terminus: UPF0229 protein CLL_A3091 (391 aa).

Disordered stretches follow at residues 1-23 (MAIFRDRTDKQVDHDRAIEDKRR) and 75-107 (VATGTGEEKRGDKIESGSKKAMGKGNKGAGNEE). Residues 80–92 (GEEKRGDKIESGS) are compositionally biased toward basic and acidic residues.

Belongs to the UPF0229 family.

The sequence is that of UPF0229 protein CLL_A3091 from Clostridium botulinum (strain Eklund 17B / Type B).